Reading from the N-terminus, the 207-residue chain is dTTP/UTP pyrophosphatase (207 aa).

The active-site Proton acceptor is the Asp-87.

It belongs to the Maf family. YhdE subfamily. A divalent metal cation serves as cofactor.

Its subcellular location is the cytoplasm. The enzyme catalyses dTTP + H2O = dTMP + diphosphate + H(+). It catalyses the reaction UTP + H2O = UMP + diphosphate + H(+). In terms of biological role, nucleoside triphosphate pyrophosphatase that hydrolyzes dTTP and UTP. May have a dual role in cell division arrest and in preventing the incorporation of modified nucleotides into cellular nucleic acids. In Bordetella bronchiseptica (strain ATCC BAA-588 / NCTC 13252 / RB50) (Alcaligenes bronchisepticus), this protein is dTTP/UTP pyrophosphatase.